The sequence spans 255 residues: 5'-nucleotidase SurE (255 aa).

The a divalent metal cation site is built by Asp-8, Asp-9, Ser-39, and Asn-91.

This sequence belongs to the SurE nucleotidase family. A divalent metal cation serves as cofactor.

It localises to the cytoplasm. It carries out the reaction a ribonucleoside 5'-phosphate + H2O = a ribonucleoside + phosphate. Nucleotidase that shows phosphatase activity on nucleoside 5'-monophosphates. The chain is 5'-nucleotidase SurE from Acinetobacter baylyi (strain ATCC 33305 / BD413 / ADP1).